The primary structure comprises 298 residues: MQTIATPSLPLGQRLAAFSHLCKPRVNSLIVFTAMIGMCLATPDFPPLLRFGVASLGIALVSFAAAALNCLVERTVDAKMARTSWRATARGDISPLETVTLATALGAAGLWLLHGFINDLTMWLTLATFVGYTVIYTLILKPATPMNIVIGGASGAMPPLLGWTAMTGQVSAEPLVLFLIIFLWTPPHFWALACYRRDDYACSGLPMLPVTHGIAFTCQHILWYTLMLAAASLIPVSLGMSGGFYLIAIGLLDLVFLGYAIALCRRYSDALARRTFRYSILYLTLLFAALFADRLIVL.

The next 9 membrane-spanning stretches (helical) occupy residues 29-49 (LIVF…PPLL), 51-71 (FGVA…LNCL), 97-117 (ETVT…HGFI), 120-140 (LTMW…TLIL), 148-168 (IVIG…AMTG), 175-195 (LVLF…LACY), 221-241 (ILWY…LGMS), 243-263 (GFYL…AIAL), and 278-298 (YSIL…LIVL).

It belongs to the UbiA prenyltransferase family. Protoheme IX farnesyltransferase subfamily.

The protein resides in the cell inner membrane. It catalyses the reaction heme b + (2E,6E)-farnesyl diphosphate + H2O = Fe(II)-heme o + diphosphate. It participates in porphyrin-containing compound metabolism; heme O biosynthesis; heme O from protoheme: step 1/1. Functionally, converts heme B (protoheme IX) to heme O by substitution of the vinyl group on carbon 2 of heme B porphyrin ring with a hydroxyethyl farnesyl side group. This Dechloromonas aromatica (strain RCB) protein is Protoheme IX farnesyltransferase.